We begin with the raw amino-acid sequence, 331 residues long: Lipoyl synthase (331 aa).

Polar residues predominate over residues 1–14 (MSTQLDASQPSNDV). The disordered stretch occupies residues 1 to 32 (MSTQLDASQPSNDVASPAAYDPTQKQKSQAKT). [4Fe-4S] cluster contacts are provided by Cys78, Cys83, Cys89, Cys104, Cys108, Cys111, and Ser318. The Radical SAM core domain maps to 89 to 307 (CFGKGTATFM…EREAYAMGFS (219 aa)).

The protein belongs to the radical SAM superfamily. Lipoyl synthase family. [4Fe-4S] cluster serves as cofactor.

Its subcellular location is the cytoplasm. It carries out the reaction [[Fe-S] cluster scaffold protein carrying a second [4Fe-4S](2+) cluster] + N(6)-octanoyl-L-lysyl-[protein] + 2 oxidized [2Fe-2S]-[ferredoxin] + 2 S-adenosyl-L-methionine + 4 H(+) = [[Fe-S] cluster scaffold protein] + N(6)-[(R)-dihydrolipoyl]-L-lysyl-[protein] + 4 Fe(3+) + 2 hydrogen sulfide + 2 5'-deoxyadenosine + 2 L-methionine + 2 reduced [2Fe-2S]-[ferredoxin]. It functions in the pathway protein modification; protein lipoylation via endogenous pathway; protein N(6)-(lipoyl)lysine from octanoyl-[acyl-carrier-protein]: step 2/2. Functionally, catalyzes the radical-mediated insertion of two sulfur atoms into the C-6 and C-8 positions of the octanoyl moiety bound to the lipoyl domains of lipoate-dependent enzymes, thereby converting the octanoylated domains into lipoylated derivatives. The polypeptide is Lipoyl synthase (Bordetella avium (strain 197N)).